The chain runs to 345 residues: Serine proteinase inhibitor 2 (345 aa).

The protein belongs to the serpin family. Poxviruses subfamily.

It is found in the host cytoplasm. Functionally, viral serpin that inhibits both cysteine and serine proteinases involved in the regulation of host inflammatory and apoptosis processes. Major anti-apoptotic protein which inhibits both intrinsic and extrinsic pathways and strongly cleaves host CASP1 and CASP8 but is a rather poor inhibitor of host CASP3. Prevents the proteolytic activity of host interleukin-1-beta converting enzyme (ICE) and ICE-like enzymes. Can also block apoptosis through host tumor necrosis factor (TNF) receptor. The inhibition of host ICE is an example of a 'cross-class' interaction, in which a serpin inhibits a non-serine proteinase. Also inhibits granzyme B. The chain is Serine proteinase inhibitor 2 (OPG199) from Vaccinia virus (strain Western Reserve) (VACV).